A 347-amino-acid chain; its full sequence is S-adenosylmethionine:tRNA ribosyltransferase-isomerase (347 aa).

The protein belongs to the QueA family. Monomer.

The protein localises to the cytoplasm. The catalysed reaction is 7-aminomethyl-7-carbaguanosine(34) in tRNA + S-adenosyl-L-methionine = epoxyqueuosine(34) in tRNA + adenine + L-methionine + 2 H(+). It participates in tRNA modification; tRNA-queuosine biosynthesis. Functionally, transfers and isomerizes the ribose moiety from AdoMet to the 7-aminomethyl group of 7-deazaguanine (preQ1-tRNA) to give epoxyqueuosine (oQ-tRNA). The protein is S-adenosylmethionine:tRNA ribosyltransferase-isomerase of Gluconobacter oxydans (strain 621H) (Gluconobacter suboxydans).